The primary structure comprises 871 residues: Dual O-methyltransferase/FAD-dependent monooxygenase CTB3 (871 aa).

The interval 1–429 is O-methyltransferase; it reads MMQFQRDLEA…GLLTVRSAGQ (429 aa). Position 279 (Asp-279) interacts with S-adenosyl-L-methionine. Catalysis depends on His-331, which acts as the Proton acceptor. Positions 430 to 871 are FAD-dependent monooxygenase; the sequence is TALSGTNTLT…NLVDCSEFVF (442 aa). Residues Glu-485, Arg-569, Asp-793, and Ala-806 each contribute to the FAD site.

It in the C-terminal section; belongs to the paxM FAD-dependent monooxygenase family. The protein in the N-terminal section; belongs to the class I-like SAM-binding methyltransferase superfamily. Cation-independent O-methyltransferase family. COMT subfamily.

The enzyme catalyses nor-toralactone + S-adenosyl-L-methionine = toralactone + S-adenosyl-L-homocysteine + H(+). The catalysed reaction is toralactone + NADH + O2 + H(+) = 1-(3,4,5-trihydroxy-7-methoxynaphthalen-2-yl)propan-2-one + CO2 + NAD(+). The protein operates within mycotoxin biosynthesis. Functionally, dual O-methyltransferase/FAD-dependent monooxygenase; part of the gene cluster that mediates the biosynthesis of cercosporin, a light-activated, non-host-selective toxin. The perylenequinone chromophore of cercosporin absorbs light energy to attain an electronically-activated triplet state and produces active oxygen species such as the hydroxyl radical, superoxide, hydrogen peroxide or singlet oxygen upon reaction with oxygen molecules. These reactive oxygen species cause damage to various cellular components including lipids, proteins and nucleic acids. The first step of cercosporin biosynthesis is performed by the polyketide synthase CTB1 which catalyzes the formation of nor-toralactone. The starter unit acyltransferase (SAT) domain of CTB1 initiates polyketide extension by the selective utilization of acetyl-CoA, which is elongated to the heptaketide in the beta-ketoacyl synthase (KS) domain by successive condensations with six malonyl units introduced by the malonyl acyltransferase (MAT) domain. The product template (PT) domain catalyzes C4-C9 and C2-C11 aldol cyclizations and dehydrations to a trihydroxynaphthalene, which is thought to be delivered to the thioesterase (TE) domain for product release. The bifunctional enzyme CTB3 then methylates nor-toralactone to toralactone before conducting an unusual oxidative aromatic ring opening. The O-methyltransferase CTB2 further methylates the nascent OH-6 of the CBT3 product, blocking further oxidation at this site before the reductase CTB6 reduces the 2-oxopropyl ketone at position C7, giving naphthalene. The FAD-dependent monooxygenase CTB5 in concert with the multicopper oxidase CTB12 are responsible for homodimerization of naphthalene with CTB7 installing the dioxepine moiety, finally producing cercosporin. The fasciclin domain-containing protein CTB11 might act with CTB5 and CTB12 whereas the roles of CTB9 and CTB10 have still to be elucidated. In Cercospora beticola (Sugarbeet leaf spot fungus), this protein is Dual O-methyltransferase/FAD-dependent monooxygenase CTB3.